The chain runs to 223 residues: Keratin-associated protein 5-4 (223 aa).

Repeat copies occupy residues 21–24 (CCKP), 27–30 (CCVP), 79–82 (CCKP), 89–92 (CCKP), 107–110 (CCKP), 117–120 (CCKP), 135–138 (CCKP), 145–148 (CCKP), 155–158 (CCKP), 173–176 (CCKP), 183–186 (CCKP), 193–196 (CCKP), 203–206 (CCKP), and 213–216 (CCAP). A 14 X 4 AA repeats of C-C-X-P region spans residues 21–216 (CCKPVCCCVP…CCCQSSCCAP (196 aa)).

Belongs to the KRTAP type 5 family. Interacts with hair keratins. As to expression, expressed during the active phases of the hair cycle in the medulla and the inner root sheath of the forming hair. Also expressed in the upper layers of the epidermis of skin.

In terms of biological role, in the hair cortex, hair keratin intermediate filaments are embedded in an interfilamentous matrix, consisting of hair keratin-associated protein (KRTAP), which are essential for the formation of a rigid and resistant hair shaft through their extensive disulfide bond cross-linking with abundant cysteine residues of hair keratins. The matrix proteins include the high-sulfur and high-glycine-tyrosine keratins. This chain is Keratin-associated protein 5-4, found in Mus musculus (Mouse).